Reading from the N-terminus, the 858-residue chain is Heat shock protein 105 kDa (858 aa).

At Ser2 the chain carries N-acetylserine. N6-acetyllysine is present on Lys471. Disordered regions lie at residues 500–585 and 801–858; these read KVPT…PPEA and VTQP…MDLD. Over residues 504 to 515 the composition is skewed to acidic residues; sequence EEEDGSSLEADM. Phosphoserine is present on residues Ser509 and Ser510. Positions 533-549 are enriched in polar residues; that stretch reads QQDNSEAGTQPQVQTDG. Position 558 is a phosphoserine (Ser558). Residue Thr562 is modified to Phosphothreonine. Composition is skewed to basic and acidic residues over residues 564 to 585 and 806 to 815; these read EESK…PPEA and PKIESPKLER. Phosphoserine is present on Ser810. Thr816 is subject to Phosphothreonine.

The protein belongs to the heat shock protein 70 family. Interacts with HSPA8/HSC70. Interacts with HSPA1A (via NBD) and HSPA1B (via NBD). Phosphorylation on Ser-509 may be important for regulation of the HSPA8/HSC70 chaperone activity. As to expression, expressed in neurons in the cerebrum and Purkinje cells in the cerebellum (at protein level). Expressed in testis and no expression or only low-level expression in liver, spleen, lung, and kidney (at protein level). Highly expressed in the brain and moderately expressed in lung, heart, thymus, spleen, liver, and small intestine.

The protein resides in the cytoplasm. It localises to the nucleus. Functionally, acts as a nucleotide-exchange factor (NEF) for chaperone proteins HSPA1A and HSPA1B, promoting the release of ADP from HSPA1A/B thereby triggering client/substrate protein release. Prevents the aggregation of denatured proteins in cells under severe stress, on which the ATP levels decrease markedly. Inhibits HSPA8/HSC70 ATPase and chaperone activities. In Mus musculus (Mouse), this protein is Heat shock protein 105 kDa (Hsph1).